Here is a 776-residue protein sequence, read N- to C-terminus: Probable E3 ubiquitin-protein ligase HECTD2 (776 aa).

Positions 1–46 (MSEAVRVPSPATPLVVAAAAPEERKGKESEREKLPPIVSAGAGATA) are disordered. The segment covering 7-20 (VPSPATPLVVAAAA) has biased composition (low complexity). At serine 9 the chain carries Phosphoserine. Basic and acidic residues predominate over residues 21 to 34 (PEERKGKESEREKL). Positions 437 to 776 (KRADLKKKLK…ISNSEGFGLE (340 aa)) constitute an HECT domain. The active-site Glycyl thioester intermediate is the cysteine 744.

The enzyme catalyses S-ubiquitinyl-[E2 ubiquitin-conjugating enzyme]-L-cysteine + [acceptor protein]-L-lysine = [E2 ubiquitin-conjugating enzyme]-L-cysteine + N(6)-ubiquitinyl-[acceptor protein]-L-lysine.. The protein operates within protein modification; protein ubiquitination. In terms of biological role, E3 ubiquitin-protein ligase which accepts ubiquitin from an E2 ubiquitin-conjugating enzyme in the form of a thioester and then directly transfers the ubiquitin to targeted substrates. This is Probable E3 ubiquitin-protein ligase HECTD2 (HECTD2) from Pongo abelii (Sumatran orangutan).